A 101-amino-acid chain; its full sequence is NAD(P)H-quinone oxidoreductase subunit 4L, chloroplastic (101 aa).

Helical transmembrane passes span 2–22 (MLEHVLFLSAYLFSIGIFGLI), 32–52 (MCLELILNAVNLNLVTFSHLF), and 61–81 (IFSIFVITIAAAEAAIGLAIV).

The protein belongs to the complex I subunit 4L family. As to quaternary structure, NDH is composed of at least 16 different subunits, 5 of which are encoded in the nucleus.

The protein localises to the plastid. The protein resides in the chloroplast thylakoid membrane. It carries out the reaction a plastoquinone + NADH + (n+1) H(+)(in) = a plastoquinol + NAD(+) + n H(+)(out). The catalysed reaction is a plastoquinone + NADPH + (n+1) H(+)(in) = a plastoquinol + NADP(+) + n H(+)(out). NDH shuttles electrons from NAD(P)H:plastoquinone, via FMN and iron-sulfur (Fe-S) centers, to quinones in the photosynthetic chain and possibly in a chloroplast respiratory chain. The immediate electron acceptor for the enzyme in this species is believed to be plastoquinone. Couples the redox reaction to proton translocation, and thus conserves the redox energy in a proton gradient. The polypeptide is NAD(P)H-quinone oxidoreductase subunit 4L, chloroplastic (Piper cenocladum (Ant piper)).